Reading from the N-terminus, the 93-residue chain is Sec-independent protein translocase protein TatA (93 aa).

A helical transmembrane segment spans residues 1 to 21 (MGAMSPWHWAIVALVVVILFG). The interval 44 to 93 (KEMQNDNSTPAPTAQQSAPAELPVADTTTAPVTPPAPVQPQPQHTEPKSA) is disordered. Over residues 51–74 (STPAPTAQQSAPAELPVADTTTAP) the composition is skewed to low complexity.

This sequence belongs to the TatA/E family. The Tat system comprises two distinct complexes: a TatABC complex, containing multiple copies of TatA, TatB and TatC subunits, and a separate TatA complex, containing only TatA subunits. Substrates initially bind to the TatABC complex, which probably triggers association of the separate TatA complex to form the active translocon.

Its subcellular location is the cell membrane. Part of the twin-arginine translocation (Tat) system that transports large folded proteins containing a characteristic twin-arginine motif in their signal peptide across membranes. TatA could form the protein-conducting channel of the Tat system. In Rhodococcus opacus (strain B4), this protein is Sec-independent protein translocase protein TatA.